The chain runs to 185 residues: Ribosome-recycling factor (185 aa).

Belongs to the RRF family.

The protein resides in the cytoplasm. In terms of biological role, responsible for the release of ribosomes from messenger RNA at the termination of protein biosynthesis. May increase the efficiency of translation by recycling ribosomes from one round of translation to another. This Streptococcus pyogenes serotype M1 protein is Ribosome-recycling factor.